Consider the following 202-residue polypeptide: Cutinase (202 aa).

The signal sequence occupies residues 1–20 (MKTSAQQLLSALLLPLSVLA). A disulfide bond links Cys31 and Cys106. The Nucleophile role is filled by Ser117. A disulfide bridge links Cys165 with Cys172. Residue Asp169 is part of the active site. Catalysis depends on His182, which acts as the Proton donor/acceptor.

This sequence belongs to the cutinase family. The 2 disulfide bonds play a critical role in holding the catalytic residues in juxta-position; reduction of the disulfide bridges results in the complete inactivation of the enzyme.

The protein resides in the secreted. It carries out the reaction cutin + H2O = cutin monomers.. Its function is as follows. Catalyzes the hydrolysis of complex carboxylic polyesters found in the cell wall of plants. Degrades cutin, a macromolecule that forms the structure of the plant cuticle. Allows pathogenic fungi to penetrate through the cuticular barrier into the host plant during the initial stage of fungal infection. The polypeptide is Cutinase (Botryotinia fuckeliana (Noble rot fungus)).